The chain runs to 403 residues: MSGRVGDLSPKQKEALAKFRENVQDVLPALPNPDDYFLLRWLRARNFNLQKSEAMLRKHVEFRKQKDIDNIMSWQPPEVVQQYLSGGMCGYDLEGSPIWYDIIGPLDAKGLLLSASKQDLFKTKMRDCELLLQECVRQTEKMGKKIEATTLIYDCEGLGLKHLWKPAVEAYGEFLCMFEENYPETLKRLFIVKAPKLFPVAYNLVKPFLSEDTRKKIQVLGANWKEVLLKYISPDQLPVEYGGTMTDPDGNPKCKSKINYGGDIPKKYYVRDQVKQQYEHSVQISRGSSHQVEYEILFPGCVLRWQFMSDGSDIGFGIFLKTKVGERQRAGEMREVLPSQRYNAHLVPEDGSLTCSDPGIYVLRFDNTYSFIHAKKVSFTVEVLLPDKALEEKMQQLGAVTPK.

N6-succinyllysine is present on residues lysine 11 and lysine 51. The CRAL-TRIO domain occupies 76–249; sequence PPEVVQQYLS…EYGGTMTDPD (174 aa). Lysine 253 and lysine 257 each carry N6-succinyllysine. Residues 275–383 form the GOLD domain; it reads KQQYEHSVQI…AKKVSFTVEV (109 aa). Lysine 393 bears the N6-succinyllysine mark.

Monomer. In terms of processing, the N-terminus is blocked.

It localises to the cytoplasm. Its subcellular location is the nucleus. Its function is as follows. Carrier protein. Binds to some hydrophobic molecules and promotes their transfer between the different cellular sites. Binds with high affinity to alpha-tocopherol. Also binds with a weaker affinity to other tocopherols and to tocotrienols. May have a transcriptional activatory activity via its association with alpha-tocopherol. Probably recognizes and binds some squalene structure, suggesting that it may regulate cholesterol biosynthesis by increasing the transfer of squalene to a metabolic active pool in the cell. This chain is SEC14-like protein 2 (SEC14L2), found in Bos taurus (Bovine).